Here is a 276-residue protein sequence, read N- to C-terminus: MSWWQVIVLAAAQGLTEFLPVSSSGHLAIVSRIFFSGDAGASFTAVSQLGTEAAVVIYFARDIVRILSAWVHGLVVKAHRNTDYRLGWYVIIGTIPICILGLFFKDDIRSGVRNLWVVVTALVVFSGVIALAEYVGRQSRHIERLTWRDAVVVGIAQTLALVPGVSRSGSTISAGLFLGLDRELAARFGFLLAIPAVFASGLFSLPDAFHPVTEGMSATGPQLLVATLIAFVLGLTAVAWLLRFLVRHNMYWFVGYRVLVGTGMLVLLATGTVAAT.

Transmembrane regions (helical) follow at residues 84–104 (YRLG…GLFF), 115–135 (LWVV…AEYV), 188–208 (FGFL…LPDA), 222–242 (QLLV…AWLL), and 250–270 (MYWF…LLAT).

This sequence belongs to the UppP family.

It localises to the cell membrane. It catalyses the reaction di-trans,octa-cis-undecaprenyl diphosphate + H2O = di-trans,octa-cis-undecaprenyl phosphate + phosphate + H(+). Catalyzes the dephosphorylation of undecaprenyl diphosphate (UPP). Confers resistance to bacitracin. This is Undecaprenyl-diphosphatase from Mycobacterium bovis (strain ATCC BAA-935 / AF2122/97).